The chain runs to 192 residues: Ion-translocating oxidoreductase complex subunit A (192 aa).

6 consecutive transmembrane segments (helical) span residues 5-25 (ILLI…FLGL), 39-59 (VGMG…AYLV), 63-83 (ILIP…VIAV), 102-122 (LLGI…VALL), 134-154 (VVYG…FAAL), and 171-191 (SIAL…TGLV).

It belongs to the NqrDE/RnfAE family. The complex is composed of six subunits: RnfA, RnfB, RnfC, RnfD, RnfE and RnfG.

The protein localises to the cell inner membrane. Part of a membrane-bound complex that couples electron transfer with translocation of ions across the membrane. The protein is Ion-translocating oxidoreductase complex subunit A of Haemophilus influenzae (strain ATCC 51907 / DSM 11121 / KW20 / Rd).